The sequence spans 465 residues: Ribulose bisphosphate carboxylase large chain (465 aa).

K4 bears the N6,N6,N6-trimethyllysine mark. Substrate contacts are provided by N113 and T163. The Proton acceptor role is filled by K165. Residue K167 coordinates substrate. K191, D193, and E194 together coordinate Mg(2+). K191 is subject to N6-carboxylysine. H284 serves as the catalytic Proton acceptor. Residues R285, H317, and S369 each contribute to the substrate site.

This sequence belongs to the RuBisCO large chain family. Type I subfamily. Heterohexadecamer of 8 large chains and 8 small chains; disulfide-linked. The disulfide link is formed within the large subunit homodimers. Mg(2+) is required as a cofactor. The disulfide bond which can form in the large chain dimeric partners within the hexadecamer appears to be associated with oxidative stress and protein turnover.

The protein localises to the plastid. The protein resides in the chloroplast. It carries out the reaction 2 (2R)-3-phosphoglycerate + 2 H(+) = D-ribulose 1,5-bisphosphate + CO2 + H2O. The catalysed reaction is D-ribulose 1,5-bisphosphate + O2 = 2-phosphoglycolate + (2R)-3-phosphoglycerate + 2 H(+). In terms of biological role, ruBisCO catalyzes two reactions: the carboxylation of D-ribulose 1,5-bisphosphate, the primary event in carbon dioxide fixation, as well as the oxidative fragmentation of the pentose substrate in the photorespiration process. Both reactions occur simultaneously and in competition at the same active site. The protein is Ribulose bisphosphate carboxylase large chain of Hamamelis mollis (Chinese witch hazel).